The chain runs to 83 residues: Putative beta-neurotoxin RjAa17f (83 aa).

Positions 1–18 (MKILIFIIASFMLIGVEC) are cleaved as a signal peptide. One can recognise an LCN-type CS-alpha/beta domain in the interval 19–82 (KEGYPMGRNG…VWDFSNIKCR (64 aa)). 4 disulfides stabilise this stretch: Cys29–Cys81, Cys33–Cys55, Cys40–Cys62, and Cys44–Cys64.

This sequence belongs to the long (4 C-C) scorpion toxin superfamily. Sodium channel inhibitor family. Beta subfamily. Expressed by the venom gland.

The protein localises to the secreted. Beta toxins bind voltage-independently at site-4 of sodium channels (Nav) and shift the voltage of activation toward more negative potentials thereby affecting sodium channel activation and promoting spontaneous and repetitive firing. This chain is Putative beta-neurotoxin RjAa17f, found in Rhopalurus junceus (Caribbean blue scorpion).